The sequence spans 245 residues: Putative binding protein HI_1525 (245 aa).

An N-terminal signal peptide occupies residues 1–19 (MKKLVAVTSMILTTFSVQA). The molybdate site is built by Ser-56 and Val-163.

The protein belongs to the bacterial solute-binding protein ModA family.

The protein localises to the periplasm. Probably involved in the binding-dependent system. In Haemophilus influenzae (strain ATCC 51907 / DSM 11121 / KW20 / Rd), this protein is Putative binding protein HI_1525.